The primary structure comprises 471 residues: Ribosomal protein uS12 methylthiotransferase RimO (471 aa).

Residues 23 to 138 (PKIGFVSLGC…VMDAVHVHVP (116 aa)) form the MTTase N-terminal domain. The [4Fe-4S] cluster site is built by C32, C68, C97, C169, C173, and C176. In terms of domain architecture, Radical SAM core spans 155–396 (LTPRHYAYLK…MAVAEAVSAE (242 aa)). The 73-residue stretch at 399–471 (RERVGAEMQV…QGHDLVGQPL (73 aa)) folds into the TRAM domain.

It belongs to the methylthiotransferase family. RimO subfamily. It depends on [4Fe-4S] cluster as a cofactor.

The protein resides in the cytoplasm. The catalysed reaction is L-aspartate(89)-[ribosomal protein uS12]-hydrogen + (sulfur carrier)-SH + AH2 + 2 S-adenosyl-L-methionine = 3-methylsulfanyl-L-aspartate(89)-[ribosomal protein uS12]-hydrogen + (sulfur carrier)-H + 5'-deoxyadenosine + L-methionine + A + S-adenosyl-L-homocysteine + 2 H(+). Functionally, catalyzes the methylthiolation of an aspartic acid residue of ribosomal protein uS12. In Methylibium petroleiphilum (strain ATCC BAA-1232 / LMG 22953 / PM1), this protein is Ribosomal protein uS12 methylthiotransferase RimO.